The chain runs to 638 residues: MGKIIGIDLGTTNSCLAIIEGGKGRVIENSEGDRTTPSIVAYTKDGEVLVGAAAKRQAVTNPKNTFYAVKRLIGRKFGDAEVQKDLDLVPYKITQHDNGDAWVATADGKKLAPQEISAKVLEKMKKTAEDFLGEKVTEAVITVPAYFNDSQRQATKDAGRIAGLDVKRIINEPTAAALAYGLDKKGGDRKIAVYDLGGGTFDVSIIEIAEVDGEKQFEVLATNGDTFLGGEDFDKRVIDYLVDEFNKDQGIDLRKDPLALQRLKDAAERAKIELSSSQQTEVNLPYITADASGPKHLNIKLTRAKLEALVDDLVRKSIEPCRIALNDAGLRTSDVQEVILVGGQTRMPKVQQAVADFFGKEPRKDVNPDEAVALGAAIQGGVLAGDVKDVLLLDVTPLSLGIETMGGVFTKIIEKNTTIPTKASQVFSTAEDGQSAVTVHVLQGEREQARFNKSLAKFDLAGIEPAPRGQPQIEVSFDIDANGILHVSAKDKKTNKEQKVEVKAGSGLSDSEIQQMVADAEAHREEDKKFQELVQARNHADGLIHSTRSAIKEHGSKVGGELIGRVEASLAELEAAVKGDDKNQIEAKSKTLEEVAQSLHMAATAEQQSGSTGAGAGASAKVDDVVDAEFTEVKADKK.

Thr-200 is modified (phosphothreonine; by autocatalysis). The segment at 598-621 (SLHMAATAEQQSGSTGAGAGASAK) is disordered.

The protein belongs to the heat shock protein 70 family.

Acts as a chaperone. This chain is Chaperone protein DnaK, found in Xylella fastidiosa (strain M23).